The sequence spans 51 residues: uncharacterized protein (51 aa).

Its function is as follows. This protein is non-essential for virus function. This is an uncharacterized protein from Sulfolobus spindle-shape virus 1 (SSV1).